Here is a 99-residue protein sequence, read N- to C-terminus: MSSQEKLLKTVIRPHVSDKTYGLSDANSTIVFEVARFANKQDVKNAVEKLFEVKVESVNILNVKGKARRFGRVEGGTKAWKKAYVKLAEGHDINFVGAE.

Belongs to the universal ribosomal protein uL23 family. As to quaternary structure, part of the 50S ribosomal subunit. Contacts protein L29, and trigger factor when it is bound to the ribosome.

Its function is as follows. One of the early assembly proteins it binds 23S rRNA. One of the proteins that surrounds the polypeptide exit tunnel on the outside of the ribosome. Forms the main docking site for trigger factor binding to the ribosome. The protein is Large ribosomal subunit protein uL23 of Francisella tularensis subsp. tularensis (strain SCHU S4 / Schu 4).